We begin with the raw amino-acid sequence, 529 residues long: Peptide chain release factor 3 (529 aa).

Residues 11-280 (SKRRTFAIIS…GLTEWAPAPK (270 aa)) form the tr-type G domain. GTP is bound by residues 20 to 27 (SHPDAGKT), 88 to 92 (DTPGH), and 142 to 145 (NKLD).

Belongs to the TRAFAC class translation factor GTPase superfamily. Classic translation factor GTPase family. PrfC subfamily.

The protein localises to the cytoplasm. In terms of biological role, increases the formation of ribosomal termination complexes and stimulates activities of RF-1 and RF-2. It binds guanine nucleotides and has strong preference for UGA stop codons. It may interact directly with the ribosome. The stimulation of RF-1 and RF-2 is significantly reduced by GTP and GDP, but not by GMP. This chain is Peptide chain release factor 3, found in Vibrio campbellii (strain ATCC BAA-1116).